The primary structure comprises 505 residues: ATP synthase subunit alpha (505 aa).

170–177 (GDRQTGKT) lines the ATP pocket.

This sequence belongs to the ATPase alpha/beta chains family. In terms of assembly, F-type ATPases have 2 components, CF(1) - the catalytic core - and CF(0) - the membrane proton channel. CF(1) has five subunits: alpha(3), beta(3), gamma(1), delta(1), epsilon(1). CF(0) has four main subunits: a, b, b' and c.

It is found in the cellular thylakoid membrane. It carries out the reaction ATP + H2O + 4 H(+)(in) = ADP + phosphate + 5 H(+)(out). In terms of biological role, produces ATP from ADP in the presence of a proton gradient across the membrane. The alpha chain is a regulatory subunit. This is ATP synthase subunit alpha from Cyanothece sp. (strain PCC 7425 / ATCC 29141).